The sequence spans 373 residues: Coiled-coil domain-containing protein 34 (373 aa).

2 disordered regions span residues 1 to 112 (MWAA…SLRG) and 118 to 137 (CASTQVESENNQEEQKQVRL). Ser-52 is subject to Phosphoserine. Positions 61–76 (NSTRSLLSPLGHQSFQ) are enriched in polar residues. The segment covering 77 to 101 (FDEDDGDGEDEEDVDDEEDVDEDAH) has biased composition (acidic residues). A coiled-coil region spans residues 152 to 286 (KEKEERDRLQ…QEWLENAKHK (135 aa)). A disordered region spans residues 324-352 (IHMPPPKEAKDLSGRKSKRPVISQPHKSS). The span at 328 to 337 (PPKEAKDLSG) shows a compositional bias: basic and acidic residues.

In terms of tissue distribution, expressed in sperm.

The protein resides in the cell projection. It localises to the cilium. It is found in the flagellum. Its function is as follows. Involved in spermatogenesis. Has a probable role in anterograde intraflagellar transport which is essential for the formation of sperm flagella. This is Coiled-coil domain-containing protein 34 (CCDC34) from Homo sapiens (Human).